Reading from the N-terminus, the 365-residue chain is UDP-N-acetylglucosamine--N-acetylmuramyl-(pentapeptide) pyrophosphoryl-undecaprenol N-acetylglucosamine transferase (365 aa).

Residues 10-12 (TGG), asparagine 124, arginine 165, serine 193, isoleucine 248, and glutamine 293 contribute to the UDP-N-acetyl-alpha-D-glucosamine site.

It belongs to the glycosyltransferase 28 family. MurG subfamily.

The protein localises to the cell inner membrane. It catalyses the reaction di-trans,octa-cis-undecaprenyl diphospho-N-acetyl-alpha-D-muramoyl-L-alanyl-D-glutamyl-meso-2,6-diaminopimeloyl-D-alanyl-D-alanine + UDP-N-acetyl-alpha-D-glucosamine = di-trans,octa-cis-undecaprenyl diphospho-[N-acetyl-alpha-D-glucosaminyl-(1-&gt;4)]-N-acetyl-alpha-D-muramoyl-L-alanyl-D-glutamyl-meso-2,6-diaminopimeloyl-D-alanyl-D-alanine + UDP + H(+). The protein operates within cell wall biogenesis; peptidoglycan biosynthesis. Cell wall formation. Catalyzes the transfer of a GlcNAc subunit on undecaprenyl-pyrophosphoryl-MurNAc-pentapeptide (lipid intermediate I) to form undecaprenyl-pyrophosphoryl-MurNAc-(pentapeptide)GlcNAc (lipid intermediate II). The sequence is that of UDP-N-acetylglucosamine--N-acetylmuramyl-(pentapeptide) pyrophosphoryl-undecaprenol N-acetylglucosamine transferase from Geotalea uraniireducens (strain Rf4) (Geobacter uraniireducens).